Consider the following 604-residue polypeptide: Transcriptional repressor rco-1 (604 aa).

Disordered stretches follow at residues 87 to 110 (RGGA…PAIG) and 124 to 264 (GGQA…DRLP). A compositionally biased stretch (pro residues) spans 144 to 163 (MPAPPGLQGPPPPPPPPSQQ). 2 stretches are compositionally biased toward low complexity: residues 164 to 177 (PPFQ…QGPG) and 190 to 209 (PGPA…PATP). Polar residues predominate over residues 210–229 (QINTPIPYNGGPAQSPQVPT). 7 WD repeats span residues 295–324 (QHES…QIYD), 342–372 (TGDL…RVWD), 384–414 (GHEQ…RLWD), 425–455 (SIED…RVWD), 469–499 (GHKD…KMWE), 523–553 (GHRD…QFWD), and 565–600 (GHKN…RIWS).

Represses transcription by RNA polymerase II. May be involved at several stages of conidiation and other growth and development processes. Appears to regulate genes that are expressed in asexual and sexual spore pathways. This chain is Transcriptional repressor rco-1 (rco-1), found in Neurospora crassa (strain ATCC 24698 / 74-OR23-1A / CBS 708.71 / DSM 1257 / FGSC 987).